The sequence spans 433 residues: Transcription factor elt-2 (433 aa).

2 disordered regions span residues 1-47 and 194-235; these read MDNN…ELPR and GQPP…RQGL. Residues 27-43 are compositionally biased toward polar residues; it reads PTQNMDPPEQNNESQLS. The span at 211 to 234 shows a compositional bias: low complexity; sequence AKQSSKKSSSSNRGSNGSASRRQG. The segment at 237–261 adopts a GATA-type zinc-finger fold; that stretch reads CSNCNGTNTTLWRRNAEGDPVCNAC. The disordered stretch occupies residues 275 to 332; the sequence is SMKKEGALQTRKRKSKSGDSSTPSTSRARERKFERASSSTEKAQRSSNRRAGSAKADR. The span at 310–324 shows a compositional bias: polar residues; it reads ASSSTEKAQRSSNRR.

As to quaternary structure, interacts with lag-1. Interacts with pha-4. Interacts with rpt-6. Post-translationally, may be ubiquitinated in response to infection by B.pseudomallei. In terms of tissue distribution, expressed in the intestine.

It localises to the nucleus. Its function is as follows. Transcriptional activator that binds to the consensus sequence 5'-[AT]GATA[AG]-3'. Predominantly directs the transcription of intestinal genes such as ges-1, cpr-6, pho-1, ftn-1, vit-2 and lev-11, and itself. Required for gut-specific differentiation, specifically acting with the GATA region-binding transcription factor elt-7 to control normal gene expression and promote normal formation of the intestine. Regulates intestinal gene expression in response to hypoxia to promote longevity. Modulation of longevity may, in part, be the result of regulation of expression of daf-16 isoforms d and f in the intestine. Regulates tissue specific gene expression at basal levels and in response to bacterial infection in the intestine to control innate immunity. Plays a role in the induction of metal-responsive genes, activating gene expression from zinc-activated promoters and iron-dependent promoters and enhancers. May regulate the expression of genes that control sensitivity to oxidative stress, in a mab-3-dependent manner, and osmotic stress, in conjunction with the GATA region-binding transcription factor elt-3. May play a role in sphingolipid signaling by regulating the expression of the sphingosine-1-phosphate degrading enzyme, sphingosine-1-phosphate lyase. May act with the Notch signaling pathway to promote endodermal gene expression. Has a protective role in response to infection by Gram-negative bacteria such as S.enterica, E.coli, P.aeruginosa and B.pseudomallei, Gram-positive bacterium E.faecalis and fungal pathogen C.neoformans. An association with the 26S proteasome regulatory subunit rpt-6, in part, controls gene expression in response to infection by P.aeruginosa. Regulates gene expression during the recovery phase following a bacterial infection. May act with p38-activated transcription factors to control p38 gene induction in response to bacterial infection. Controls lysosome formation in the intestine by controlling lysosomal gene expression. The protein is Transcription factor elt-2 of Caenorhabditis elegans.